The sequence spans 649 residues: Glycerol-3-phosphate dehydrogenase, mitochondrial (649 aa).

Residue 69–97 (DVLIIGGGATGTGCALDAATRGLNVALVE) participates in FAD binding.

This sequence belongs to the FAD-dependent glycerol-3-phosphate dehydrogenase family. FAD is required as a cofactor.

Its subcellular location is the mitochondrion inner membrane. The protein localises to the mitochondrion intermembrane space. It carries out the reaction a quinone + sn-glycerol 3-phosphate = dihydroxyacetone phosphate + a quinol. It participates in polyol metabolism; glycerol degradation via glycerol kinase pathway; glycerone phosphate from sn-glycerol 3-phosphate (anaerobic route): step 1/1. This chain is Glycerol-3-phosphate dehydrogenase, mitochondrial (GUT2), found in Saccharomyces cerevisiae (strain ATCC 204508 / S288c) (Baker's yeast).